The sequence spans 595 residues: MQIIEIREPEQADFKQEQQIAVGIDFGTTNSLIAIAANRKVKVIKSIDDKELIPTTIDFTSNNFTIGNNKGLRSIKRLFGKTLKEILNTPALFSLVKDYLDVNSSELKLNFANKQLRVPEIAAEIFIYLKNQAEEQLKTNLTKAVITVPAHFNDAARGEVMLAAKIAGFEVLRLIAEPTAAAYAYGLNNNQKGCYLVYDLGGGTFDVSILNIQEGIFQVIATNGDNMLGGNDIDVVITQYLCNKFDLPNSIDTLQLAKKAKETLTYKDSFNNDNVSINKQTLEQLILPLVERTINIAQECLEQAGNPNIDGVILVGGATRTPLIKDELYKAFKIDILSDIDPDKAVVWGAALQAENLIAPHTNSLLIDVAPLSLGMELYGGIVEKIIMHNTPIPISVVKEFTTYVDNQTGIQFHILQGEREMAADCRSLARFELKGLPPMKAGYIRAEVTFSIDADGILSVSAYEKISNTSHAIEVKPNHGIDKTEIDIMLENAYKNAKIDYTTRLLQEAVIEAEALIFSIERAIAELTTLLSESEISIINSLLDNIKEAVHARDWILINNSIKEFKSKIKKSMDTKFNIIINDLLKGKNINQIK.

It belongs to the heat shock protein 70 family.

Functionally, chaperone involved in the maturation of iron-sulfur cluster-containing proteins. Has a low intrinsic ATPase activity which is markedly stimulated by HscB. The chain is Chaperone protein HscA homolog from Rickettsia peacockii (strain Rustic).